Here is a 440-residue protein sequence, read N- to C-terminus: Tyrosine--tRNA ligase (440 aa).

Tyr46 contributes to the L-tyrosine binding site. The 'HIGH' region signature appears at 51–60 (PTAASLHIGN). Residues Tyr181 and Gln185 each coordinate L-tyrosine. Positions 241 to 245 (KFGKS) match the 'KMSKS' region motif. Lys244 contributes to the ATP binding site. Residues 373–439 (DRVIDAAQAA…GKKALGAVEN (67 aa)) enclose the S4 RNA-binding domain.

This sequence belongs to the class-I aminoacyl-tRNA synthetase family. TyrS type 1 subfamily. Homodimer.

Its subcellular location is the cytoplasm. It catalyses the reaction tRNA(Tyr) + L-tyrosine + ATP = L-tyrosyl-tRNA(Tyr) + AMP + diphosphate + H(+). Catalyzes the attachment of tyrosine to tRNA(Tyr) in a two-step reaction: tyrosine is first activated by ATP to form Tyr-AMP and then transferred to the acceptor end of tRNA(Tyr). This Bifidobacterium longum subsp. infantis (strain ATCC 15697 / DSM 20088 / JCM 1222 / NCTC 11817 / S12) protein is Tyrosine--tRNA ligase.